Here is a 482-residue protein sequence, read N- to C-terminus: UDP-N-acetylmuramate--L-alanine ligase (482 aa).

129-135 contributes to the ATP binding site; it reads GTHGKTT.

It belongs to the MurCDEF family.

It localises to the cytoplasm. It carries out the reaction UDP-N-acetyl-alpha-D-muramate + L-alanine + ATP = UDP-N-acetyl-alpha-D-muramoyl-L-alanine + ADP + phosphate + H(+). Its pathway is cell wall biogenesis; peptidoglycan biosynthesis. Functionally, cell wall formation. This chain is UDP-N-acetylmuramate--L-alanine ligase, found in Acinetobacter baumannii (strain AB307-0294).